The following is a 148-amino-acid chain: UPF0178 protein CA_C2825 (148 aa).

It belongs to the UPF0178 family.

This is UPF0178 protein CA_C2825 from Clostridium acetobutylicum (strain ATCC 824 / DSM 792 / JCM 1419 / IAM 19013 / LMG 5710 / NBRC 13948 / NRRL B-527 / VKM B-1787 / 2291 / W).